Here is a 297-residue protein sequence, read N- to C-terminus: GTPase Era (297 aa).

Residues 7 to 174 enclose the Era-type G domain; that stretch reads HSGFVSIIGR…VQVVRDLLPE (168 aa). The G1 stretch occupies residues 15–22; that stretch reads GRPNVGKS. 15–22 contributes to the GTP binding site; the sequence is GRPNVGKS. Residues 41 to 45 are G2; that stretch reads QTTRN. A G3 region spans residues 62–65; that stretch reads DTPG. GTP-binding positions include 62-66 and 124-127; these read DTPGI and NKVD. The tract at residues 124-127 is G4; the sequence is NKVD. The interval 153 to 155 is G5; sequence VSA. Residues 205 to 282 form the KH type-2 domain; that stretch reads THDEVPYSVA…FLELFVRVSR (78 aa).

Belongs to the TRAFAC class TrmE-Era-EngA-EngB-Septin-like GTPase superfamily. Era GTPase family. As to quaternary structure, monomer.

The protein localises to the cytoplasm. Its subcellular location is the cell inner membrane. In terms of biological role, an essential GTPase that binds both GDP and GTP, with rapid nucleotide exchange. Plays a role in 16S rRNA processing and 30S ribosomal subunit biogenesis and possibly also in cell cycle regulation and energy metabolism. The sequence is that of GTPase Era from Geotalea daltonii (strain DSM 22248 / JCM 15807 / FRC-32) (Geobacter daltonii).